The following is a 258-amino-acid chain: Microtubule-associated protein RP/EB family member 1 (258 aa).

In terms of domain architecture, Calponin-homology (CH) spans Asn-14–Asp-116. In terms of domain architecture, EB1 C-terminal spans Lys-175–Ile-245.

This sequence belongs to the MAPRE family.

Its subcellular location is the cytoplasm. The protein resides in the cytoskeleton. It is found in the microtubule organizing center. It localises to the centrosome. The protein localises to the golgi apparatus. Its subcellular location is the spindle. The protein resides in the spindle pole. In terms of biological role, plus-end tracking protein (+TIP) that binds to the plus-end of microtubules and regulates the dynamics of the microtubule cytoskeleton. Promotes cytoplasmic microtubule nucleation and elongation. Involved in mitotic spindle positioning by stabilizing microtubules and promoting dynamic connection between astral microtubules and the cortex during mitotic chromosome segregation. This is Microtubule-associated protein RP/EB family member 1 (MAPRE1) from Gallus gallus (Chicken).